A 301-amino-acid polypeptide reads, in one-letter code: MTRCAVVAAVAAVLLVAGAAAAGGGEEEEAPSTCARRGPGFVDALASRCPCIRIEPSPPVEVRGEAIAKELNLRHRGVTYSVLFYAAWCPFSSKFRPIFEALSTMFPQIYHFTVEESSAMPSLFSRYGVRGFPAILLVNETTMVRYWGPKDLSSLVDFYKETTGFDPIAYFDVDHQDSTGDFRPVTPGDRSLRKIAKDEPFVLLAVLFIILKVAAHFVPIVVSHLKTFLVVRVQNLNLGIRRGSSQLLERALNVLDVKRLCSKLRLSNKTRDLRKGASNARAWASSFTSVSLGESSSSRQA.

A signal peptide spans 1-21 (MTRCAVVAAVAAVLLVAGAAA). A Thioredoxin domain is found at 51–164 (CIRIEPSPPV…LVDFYKETTG (114 aa)). An N-linked (GlcNAc...) asparagine glycan is attached at Asn139. The helical transmembrane segment at 201-221 (FVLLAVLFIILKVAAHFVPIV) threads the bilayer. N-linked (GlcNAc...) asparagine glycosylation is present at Asn268.

Its subcellular location is the membrane. This chain is 5'-adenylylsulfate reductase-like 5 (APRL5), found in Oryza sativa subsp. japonica (Rice).